The sequence spans 197 residues: Phosphoheptose isomerase (197 aa).

In terms of domain architecture, SIS spans 37–197; that stretch reads MLQCLMNDGK…CIDSVLLEGM (161 aa). 52-54 contributes to the substrate binding site; that stretch reads NGG. 2 residues coordinate Zn(2+): histidine 61 and glutamate 65. Substrate-binding positions include glutamate 65, 94-95, 120-122, serine 125, and glutamine 175; these read ND and STS. 2 residues coordinate Zn(2+): glutamine 175 and histidine 183.

Belongs to the SIS family. GmhA subfamily. Homotetramer. Requires Zn(2+) as cofactor.

The protein resides in the cytoplasm. The catalysed reaction is 2 D-sedoheptulose 7-phosphate = D-glycero-alpha-D-manno-heptose 7-phosphate + D-glycero-beta-D-manno-heptose 7-phosphate. It functions in the pathway carbohydrate biosynthesis; D-glycero-D-manno-heptose 7-phosphate biosynthesis; D-glycero-alpha-D-manno-heptose 7-phosphate and D-glycero-beta-D-manno-heptose 7-phosphate from sedoheptulose 7-phosphate: step 1/1. In terms of biological role, catalyzes the isomerization of sedoheptulose 7-phosphate in D-glycero-D-manno-heptose 7-phosphate. This is Phosphoheptose isomerase from Neisseria meningitidis serogroup C / serotype 2a (strain ATCC 700532 / DSM 15464 / FAM18).